Reading from the N-terminus, the 242-residue chain is Cysteine-rich venom protein helothermine (242 aa).

The N-terminal stretch at 1 to 19 (MILLSLYLCLAAMLHQSEG) is a signal peptide. The SCP domain maps to 41 to 169 (DKHNNLRRIV…TYKYYQVCQY (129 aa)). Disulfide bonds link Cys-77–Cys-155, Cys-94–Cys-170, Cys-150–Cys-167, Cys-189–Cys-196, Cys-192–Cys-201, Cys-205–Cys-237, Cys-214–Cys-231, and Cys-223–Cys-235. One can recognise a ShKT domain in the interval 205 to 237 (CKQNDVYNNCPDLKKQVGCGHPIMKDCMATCKC).

This sequence belongs to the CRISP family. As to expression, expressed by the venom gland.

It localises to the secreted. Its function is as follows. Alters a variety of ion channel activities, including voltage-gated potassium channels (Kv), voltage-gated calcium channels (L-, N-, and P-type) (Cav) and ryanodine receptors (RyR). Is toxic to mice (causes lethargy, partial paralysis of rear limbs and lowering of body temperature). The protein is Cysteine-rich venom protein helothermine of Heloderma horridum horridum (Mexican beaded lizard).